A 542-amino-acid chain; its full sequence is GMP synthase [glutamine-hydrolyzing] (542 aa).

The Glutamine amidotransferase type-1 domain maps to 28–218; sequence MIVILDFGSQ…VYHICECEPT (191 aa). The active-site Nucleophile is the cysteine 105. Active-site residues include histidine 192 and glutamate 194. Residues 219–417 form the GMPS ATP-PPase domain; the sequence is WTTEAFVEEA…IGLPEEIVRR (199 aa). 246-252 serves as a coordination point for ATP; it reads SGGVDSS.

As to quaternary structure, homodimer.

It catalyses the reaction XMP + L-glutamine + ATP + H2O = GMP + L-glutamate + AMP + diphosphate + 2 H(+). The protein operates within purine metabolism; GMP biosynthesis; GMP from XMP (L-Gln route): step 1/1. In terms of biological role, catalyzes the synthesis of GMP from XMP. This Gloeothece citriformis (strain PCC 7424) (Cyanothece sp. (strain PCC 7424)) protein is GMP synthase [glutamine-hydrolyzing].